A 291-amino-acid chain; its full sequence is Gamma-sarcoglycan (291 aa).

Residues 1–37 (MVREQYTTATEGICIERPENQYVYKIGIYGWRKRCLY) lie on the Cytoplasmic side of the membrane. Residues 38-58 (LFVLLLLIILVVNLALTIWIL) form a helical; Signal-anchor for type II membrane protein membrane-spanning segment. Residues 59-291 (KVMWFSPAGM…TCQEHNHICL (233 aa)) lie on the Extracellular side of the membrane. Asn-110 carries N-linked (GlcNAc...) asparagine glycosylation. Cystine bridges form between Cys-265/Cys-290 and Cys-267/Cys-283.

The protein belongs to the sarcoglycan beta/delta/gamma/zeta family. Interacts with the syntrophin SNTA1. Cross-link to form 2 major subcomplexes: one consisting of SGCB, SGCD and SGCG and the other consisting of SGCB and SGCD. The association between SGCB and SGCG is particularly strong while SGCA is loosely associated with the other sarcoglycans. Interacts with FLNC. In terms of tissue distribution, expressed in skeletal and heart muscle.

Its subcellular location is the cell membrane. It localises to the sarcolemma. It is found in the cytoplasm. The protein resides in the cytoskeleton. Component of the sarcoglycan complex, a subcomplex of the dystrophin-glycoprotein complex which forms a link between the F-actin cytoskeleton and the extracellular matrix. The protein is Gamma-sarcoglycan (SGCG) of Homo sapiens (Human).